An 842-amino-acid polypeptide reads, in one-letter code: Serine/threonine-protein phosphatase 4 regulatory subunit 3 (842 aa).

As to quaternary structure, regulatory subunit 3 (R3) of the histone H2A phosphatase complex (HTP-C) consisting of PPH3, PSY2 and PSY4.

Its subcellular location is the nucleus. Functionally, core regulatory subunit of the histone H2A phosphatase complex, which dephosphorylates H2AS128ph (gamma-H2A) that has been displaced from sites of DNA lesions in the double-stranded DNA break repair process. Dephosphorylation is necessary for efficient recovery from the DNA damage checkpoint. In Candida glabrata (strain ATCC 2001 / BCRC 20586 / JCM 3761 / NBRC 0622 / NRRL Y-65 / CBS 138) (Yeast), this protein is Serine/threonine-protein phosphatase 4 regulatory subunit 3 (PSY2).